Reading from the N-terminus, the 605-residue chain is Kelch-like protein 41b (605 aa).

The BTB domain maps to 32-102 (VDCTLKIGDR…YSAEIDLVDD (71 aa)). The region spanning 136–238 (CLAVFRLGLV…PEKYFREKVE (103 aa)) is the BACK domain. Kelch repeat units follow at residues 345–397 (QLFI…ESEN), 398–446 (LLFA…SHNN), 447–494 (LVYC…VHKG), 496–541 (IIVT…SSGG), and 543–598 (LFSI…MRLN).

It localises to the cytoplasm. The protein resides in the cytoskeleton. It is found in the sarcoplasmic reticulum membrane. The protein localises to the endoplasmic reticulum membrane. Functionally, involved in skeletal muscle development and maintenance. This Danio rerio (Zebrafish) protein is Kelch-like protein 41b.